Reading from the N-terminus, the 227-residue chain is 7-cyano-7-deazaguanine synthase (227 aa).

7–17 (VSGGMDSLVAT) contacts ATP. 4 residues coordinate Zn(2+): Cys-187, Cys-195, Cys-198, and Cys-201.

This sequence belongs to the QueC family. It depends on Zn(2+) as a cofactor.

The catalysed reaction is 7-carboxy-7-deazaguanine + NH4(+) + ATP = 7-cyano-7-deazaguanine + ADP + phosphate + H2O + H(+). It participates in purine metabolism; 7-cyano-7-deazaguanine biosynthesis. In terms of biological role, catalyzes the ATP-dependent conversion of 7-carboxy-7-deazaguanine (CDG) to 7-cyano-7-deazaguanine (preQ(0)). The chain is 7-cyano-7-deazaguanine synthase from Chlorobaculum parvum (strain DSM 263 / NCIMB 8327) (Chlorobium vibrioforme subsp. thiosulfatophilum).